The chain runs to 373 residues: Diels-Alderase (373 aa).

It belongs to the Diels-Alderase family.

It carries out the reaction (5S)-3-[(2E,6R,8E,10E,12E)-2,6-dimethyltetradeca-2,8,10,12-tetraenoyl]-5-(hydroxymethyl)pyrrolidine-2,4-dione = trichosetin. It participates in mycotoxin biosynthesis. Functionally, hybrid PKS-NRPS synthetase; part of the gene cluster that mediates the biosynthesis of trichosetin, a trans-fused decalin-containing tetramic acid with antimicrobial activity. The PKS module of PKS-NRPS1 together with the enoylreductase (ER) catalyze the formation of the polyketide unit which is then conjugated to L-serine by the condensation domain of the PKS-NRPS1 NRPS module. Activity of the Dieckmann cyclase domain (RED) results in release of the Dieckmann product intermediate. Diels-Alderase (DA) is involved in endo-selective Diels-Alder cycloaddition to form the decalin ring, leading to the production of N-desmethylequisetin also called trichosetin. The cluster does not contain the equisetin N-methyltransferase and consequently, trichosetin is isolated as final product. This chain is Diels-Alderase, found in Gibberella fujikuroi (strain CBS 195.34 / IMI 58289 / NRRL A-6831) (Bakanae and foot rot disease fungus).